The sequence spans 1292 residues: SH3 and multiple ankyrin repeat domains protein 2 (1292 aa).

The PDZ domain occupies 56 to 150; sequence TVVLQKKDNE…HLVLKVVTVT (95 aa). Disordered stretches follow at residues 155-176, 331-393, 488-508, 604-656, 671-743, 774-811, and 938-968; these read PDDT…TALS, MPDA…SDNV, IKEP…METD, SSNA…KLLD, ALKE…EKKN, LTES…SECG, and IEEV…TLSS. The segment covering 338–354 has biased composition (pro residues); it reads IPPPPATLPPSPPPPSP. A compositionally biased stretch (low complexity) spans 355 to 365; that stretch reads SSFNSPKSPAP. The segment covering 375–384 has biased composition (polar residues); the sequence is FTQNSGTKSP. Residues 492–504 are compositionally biased toward low complexity; sequence STSSSGKSSQGSS. Positions 604–623 are enriched in polar residues; that stretch reads SSNAFTNNDSSHQGDVSNAR. Basic and acidic residues predominate over residues 719–743; that stretch reads KRQETESKHEPDSSKEEKRQGEKKN. Basic and acidic residues predominate over residues 941–952; sequence VDSRSGSDHHLE. Residues 953-968 are compositionally biased toward low complexity; it reads TTSTISTVSSISTLSS. The SH3-binding motif lies at 991 to 997; that stretch reads PPVPPKP. The disordered stretch occupies residues 1087–1115; sequence TKTGEGLDSPTGMKTASLSTRGTDALSTV. Residues 1098–1115 show a composition bias toward polar residues; sequence GMKTASLSTRGTDALSTV. Residues 1229–1292 form the SAM domain; sequence WTKQDVAEWL…ERALKQLLDR (64 aa).

It belongs to the SHANK family.

It is found in the cytoplasm. Its subcellular location is the synapse. It localises to the postsynaptic density. Functionally, seems to be an adapter protein in the postsynaptic density (PSD) of excitatory synapses that interconnects receptors of the postsynaptic membrane including NMDA-type and metabotropic glutamate receptors, and the actin-based cytoskeleton. May play a role in the structural and functional organization of the dendritic spine and synaptic junction. The chain is SH3 and multiple ankyrin repeat domains protein 2 (shank2) from Xenopus laevis (African clawed frog).